The chain runs to 244 residues: Phosphoadenosine 5'-phosphosulfate reductase (244 aa).

Cys-239 (nucleophile; cysteine thiosulfonate intermediate) is an active-site residue.

The protein belongs to the PAPS reductase family. CysH subfamily.

The protein resides in the cytoplasm. The catalysed reaction is [thioredoxin]-disulfide + sulfite + adenosine 3',5'-bisphosphate + 2 H(+) = [thioredoxin]-dithiol + 3'-phosphoadenylyl sulfate. The protein operates within sulfur metabolism; hydrogen sulfide biosynthesis; sulfite from sulfate: step 3/3. Its function is as follows. Catalyzes the formation of sulfite from phosphoadenosine 5'-phosphosulfate (PAPS) using thioredoxin as an electron donor. The sequence is that of Phosphoadenosine 5'-phosphosulfate reductase from Escherichia coli O8 (strain IAI1).